We begin with the raw amino-acid sequence, 134 residues long: Small ribosomal subunit protein uS8 (134 aa).

Belongs to the universal ribosomal protein uS8 family. As to quaternary structure, part of the 30S ribosomal subunit. Contacts proteins S5 and S12.

Its function is as follows. One of the primary rRNA binding proteins, it binds directly to 16S rRNA central domain where it helps coordinate assembly of the platform of the 30S subunit. This is Small ribosomal subunit protein uS8 from Pseudothermotoga lettingae (strain ATCC BAA-301 / DSM 14385 / NBRC 107922 / TMO) (Thermotoga lettingae).